A 439-amino-acid chain; its full sequence is MVIDITKKYPELKEIYELTVNHTIWRKKECINLIASENVMSPLAMLLYLNDMMHRYAEGKPFKRFYQGLKFVDELEVKAQRIIGELLETDYVELRPISGTIANATVFKAFAEHGDKAVVVPVQAGAHVSHTRYGTLGGLGIEQVEMPFNIEEWNIDVDGAKKVIEKVKPKIVILGGSLYIFPHPVKEIAEAAHSVGAKLMYDVAHVLGLITGKVWENPLKQGADILTSSTHKTFPGPQGGLIATVTKDDYKKVSKIVFPVFVSNHHLHRLAALAVTGLEMKYFGRQYAEQIVKNAKAFAEALAENGFKVIGENKGYTESHQVIIDVREHGGGAKNAKLLEEANIIVNKNMLPWDKPEDIKNPSGIRLGVQEVTRWGMKEEDMKTIAEFMRLVVIDKRDPKEIRNKVIEFRKNFLEIHYGFKISGEEETKLLKIMLHGEV.

Position 126-128 (126-128) interacts with (6S)-5,6,7,8-tetrahydrofolate; it reads AHV. Lys232 carries the post-translational modification N6-(pyridoxal phosphate)lysine.

It belongs to the SHMT family. As to quaternary structure, homodimer. Pyridoxal 5'-phosphate serves as cofactor.

Its subcellular location is the cytoplasm. Its pathway is amino-acid biosynthesis; glycine biosynthesis; glycine from L-serine: step 1/1. Catalyzes the reversible interconversion of serine and glycine with a modified folate serving as the one-carbon carrier. Also exhibits a pteridine-independent aldolase activity toward beta-hydroxyamino acids, producing glycine and aldehydes, via a retro-aldol mechanism. In Staphylothermus marinus (strain ATCC 43588 / DSM 3639 / JCM 9404 / F1), this protein is Serine hydroxymethyltransferase.